A 555-amino-acid chain; its full sequence is 4-coumarate--CoA ligase-like 9 (555 aa).

The ATP site is built by serine 200, serine 201, glycine 202, threonine 203, threonine 204, and lysine 208. (E)-4-coumaroyl-AMP is bound at residue tyrosine 248. Position 269 (arginine 269) interacts with CoA. An SBD1 region spans residues 271 to 342; it reads DLRTFLRALV…RKFPGVQVEE (72 aa). Position 320 (alanine 320) interacts with (E)-4-coumaroyl-AMP. ATP is bound by residues glutamate 342, alanine 343, threonine 347, aspartate 431, and arginine 446. 2 residues coordinate (E)-4-coumaroyl-AMP: alanine 343 and threonine 347. Positions 343 to 410 are SBD2; the sequence is AYGLTEHSCI…VRSQSVMQGY (68 aa). Positions 448 and 452 each coordinate (E)-4-coumaroyl-AMP. Residues lysine 454 and glycine 455 each contribute to the CoA site. Lysine 537 provides a ligand contact to ATP.

It belongs to the ATP-dependent AMP-binding enzyme family. As to quaternary structure, interacts with STS1. The cofactor is Mg(2+).

It catalyses the reaction (E)-4-coumarate + ATP + CoA = (E)-4-coumaroyl-CoA + AMP + diphosphate. The catalysed reaction is (E)-4-coumarate + ATP + H(+) = (E)-4-coumaroyl-AMP + diphosphate. The enzyme catalyses (E)-4-coumaroyl-AMP + CoA = (E)-4-coumaroyl-CoA + AMP + H(+). Functionally, carboxylate--CoA ligase that may use 4-coumarate as substrate. Follows a two-step reaction mechanism, wherein the carboxylate substrate first undergoes adenylation by ATP, followed by a thioesterification in the presence of CoA to yield the final CoA thioester. In Oryza sativa subsp. japonica (Rice), this protein is 4-coumarate--CoA ligase-like 9 (4CLL9).